The primary structure comprises 162 residues: Interleukin-15 (162 aa).

The N-terminal stretch at 1–29 (MRILKPYLRSTSIQCYLCLLLNSHFLTEA) is a signal peptide. Positions 30–48 (GIHVFILGCISASLPKTEA) are excised as a propeptide. Cystine bridges form between cysteine 83/cysteine 133 and cysteine 90/cysteine 136. 4 N-linked (GlcNAc...) asparagine glycosylation sites follow: asparagine 104, asparagine 113, asparagine 121, and asparagine 127.

Belongs to the IL-15/IL-21 family.

Its subcellular location is the secreted. In terms of biological role, cytokine that plays a major role in the development of inflammatory and protective immune responses to microbial invaders and parasites by modulating immune cells of both the innate and adaptive immune systems. Stimulates the proliferation of natural killer cells, T-cells and B-cells and promotes the secretion of several cytokines. In monocytes, induces the production of IL8 and monocyte chemotactic protein 1/CCL2, two chemokines that attract neutrophils and monocytes respectively to sites of infection. Unlike most cytokines, which are secreted in soluble form, IL15 is expressed in association with its high affinity IL15RA on the surface of IL15-producing cells and delivers signals to target cells that express IL2RB and IL2RG receptor subunits. Binding to its receptor triggers the phosphorylation of JAK1 and JAK3 and the recruitment and subsequent phosphorylation of signal transducer and activator of transcription-3/STAT3 and STAT5. In mast cells, induces the rapid tyrosine phosphorylation of STAT6 and thereby controls mast cell survival and release of cytokines such as IL4. This Bos taurus (Bovine) protein is Interleukin-15 (IL15).